Consider the following 438-residue polypeptide: GTPase Obg (438 aa).

The region spanning 2–160 (SMFLDTAKIS…RELELELKIL (159 aa)) is the Obg domain. A disordered region spans residues 128–147 (NIRFATPRNPAPEIAENGEP). One can recognise an OBG-type G domain in the interval 161–338 (ADVGLVGFPS…LLDATANLLA (178 aa)). Residues 167 to 174 (GFPSVGKS), 192 to 196 (FTTIV), 214 to 217 (DLPG), 284 to 287 (NKMD), and 319 to 321 (STL) each bind GTP. The Mg(2+) site is built by serine 174 and threonine 194. In terms of domain architecture, OCT spans 360-438 (GFSEEEKAFE…IGNFEFEFVD (79 aa)).

Belongs to the TRAFAC class OBG-HflX-like GTPase superfamily. OBG GTPase family. In terms of assembly, monomer. It depends on Mg(2+) as a cofactor.

It is found in the cytoplasm. Its function is as follows. An essential GTPase which binds GTP, GDP and possibly (p)ppGpp with moderate affinity, with high nucleotide exchange rates and a fairly low GTP hydrolysis rate. Plays a role in control of the cell cycle, stress response, ribosome biogenesis and in those bacteria that undergo differentiation, in morphogenesis control. The protein is GTPase Obg of Streptococcus uberis (strain ATCC BAA-854 / 0140J).